A 294-amino-acid chain; its full sequence is UPF0761 membrane protein YPTB0027 (294 aa).

Helical transmembrane passes span Leu-44 to Phe-64, Ile-67 to Ile-87, Gly-108 to Trp-128, Leu-136 to Ala-156, Val-185 to Val-205, Ala-212 to Met-232, and Val-246 to Leu-266.

The protein belongs to the UPF0761 family.

It localises to the cell inner membrane. The protein is UPF0761 membrane protein YPTB0027 of Yersinia pseudotuberculosis serotype I (strain IP32953).